The following is a 487-amino-acid chain: ATP synthase subunit beta, plastid (487 aa).

Glycine 169–threonine 176 is a binding site for ATP.

Belongs to the ATPase alpha/beta chains family. In terms of assembly, F-type ATPases have 2 components, CF(1) - the catalytic core - and CF(0) - the membrane proton channel. CF(1) has five subunits: alpha(3), beta(3), gamma(1), delta(1), epsilon(1). CF(0) has four main subunits: a(1), b(1), b'(1) and c(9-12).

The protein resides in the plastid membrane. It catalyses the reaction ATP + H2O + 4 H(+)(in) = ADP + phosphate + 5 H(+)(out). Produces ATP from ADP in the presence of a proton gradient across the membrane. The catalytic sites are hosted primarily by the beta subunits. The chain is ATP synthase subunit beta, plastid (atpB) from Cuscuta pentagona (Five-angled dodder).